We begin with the raw amino-acid sequence, 117 residues long: WLMIIEQKCNIIVMLAECVEAGKPKCHKYWPNDNMEETYGIVSVTNKEEIKYCGFTRRILLVSAKLKDGSVLTTVTQYHFTKWPDHGVPQTTSAIIRMHREIMKANKDLIGQSPIVV.

Residues 1–117 (WLMIIEQKCN…DLIGQSPIVV (117 aa)) form the Tyrosine-protein phosphatase domain. Substrate is bound at residue D85.

This sequence belongs to the protein-tyrosine phosphatase family.

It catalyses the reaction O-phospho-L-tyrosyl-[protein] + H2O = L-tyrosyl-[protein] + phosphate. This chain is Tyrosine-protein phosphatase 25 (STY-25), found in Styela plicata (Wrinkled sea squirt).